We begin with the raw amino-acid sequence, 436 residues long: 3-ketoacyl-CoA thiolase (436 aa).

The Acyl-thioester intermediate role is filled by C99. Residues H392 and C422 each act as proton acceptor in the active site.

This sequence belongs to the thiolase-like superfamily. Thiolase family. Heterotetramer of two alpha chains (FadJ) and two beta chains (FadI).

The protein resides in the cytoplasm. The catalysed reaction is an acyl-CoA + acetyl-CoA = a 3-oxoacyl-CoA + CoA. The protein operates within lipid metabolism; fatty acid beta-oxidation. In terms of biological role, catalyzes the final step of fatty acid oxidation in which acetyl-CoA is released and the CoA ester of a fatty acid two carbons shorter is formed. The chain is 3-ketoacyl-CoA thiolase from Shewanella baltica (strain OS155 / ATCC BAA-1091).